Here is a 201-residue protein sequence, read N- to C-terminus: Probable calcium-binding protein CML15 (201 aa).

The tract at residues 1–55 (MGKVRAFFSRKGRGNSSGRSRSMREAAMNVDWSPRPSDLAAAAAAKPRPPAAEDE) is disordered. 4 EF-hand domains span residues 51–86 (AAEDETERVFRKFDANGDGRISRAELAALFRSVGHA), 87–122 (VTDDEVARMMQEADSDGDGYISLGEFAAISAPPPGD), 125–160 (AAEEDLRHAFGVFDADGNGVITPAELARVLRGIGEA), and 161–196 (ATVAQCRRMIDGVDRNGDGLINFEEFKLMMAAGAGF). Ca(2+)-binding residues include D64, N66, D68, R70, E75, D100, D102, D104, Y106, E111, D138, D140, N142, E149, D174, N176, D178, and E185.

Its function is as follows. Potential calcium sensor. The protein is Probable calcium-binding protein CML15 (CML15) of Oryza sativa subsp. japonica (Rice).